Here is a 397-residue protein sequence, read N- to C-terminus: Phosphoglycerate kinase (397 aa).

Substrate is bound by residues 23–25, Arg38, 61–64, Arg122, and Arg155; these read DFN and HMGK. ATP is bound by residues Lys206, Gly296, Glu327, and 353–356; that span reads GGDS.

It belongs to the phosphoglycerate kinase family. Monomer.

It is found in the cytoplasm. The enzyme catalyses (2R)-3-phosphoglycerate + ATP = (2R)-3-phospho-glyceroyl phosphate + ADP. The protein operates within carbohydrate degradation; glycolysis; pyruvate from D-glyceraldehyde 3-phosphate: step 2/5. This chain is Phosphoglycerate kinase, found in Clostridium perfringens (strain ATCC 13124 / DSM 756 / JCM 1290 / NCIMB 6125 / NCTC 8237 / Type A).